The following is a 409-amino-acid chain: MSESISHQLQLIRRGCQELLIEEEFAQKLAQGRPLRVKAGFDPTAPDLHLGHTVLLNKLRQLQDLGHHILFLIGDFTGMIGDPSGKSATRPPLTREQITQNADTYASQVFKILKPEQTEVVFNSSWMDKFSAADVIRLAATYTVARMLERDDFSKRYHENRPIAIHEFLYPLVQGYDSVALKADLELGGTDQKFNLLVGRELQKHYGQPPQCILTMPLLEGLDGIQKMSKSLNNYVGINESPAEIFGKLMSVSDTLMWRYIELLSFESLETVRQWQNEVESGCNPREIKMRFAREIVARFHSQTDAVRAAEEFEARFSKGVIPDDIPEKKLYIQDAGLALPQLLKLAGLTASTSEALRMIEQGGVKLNGDKVSDKTRIIPSNVTVIAQIGKRKFAKVTLVTEQSGKQAN.

The short motif at 43-52 (PTAPDLHLGH) is the 'HIGH' region element. Residues 227–231 (KMSKS) carry the 'KMSKS' region motif. Residue lysine 230 participates in ATP binding. The S4 RNA-binding domain maps to 338-399 (LALPQLLKLA…GKRKFAKVTL (62 aa)).

Belongs to the class-I aminoacyl-tRNA synthetase family. TyrS type 2 subfamily. Homodimer.

It is found in the cytoplasm. It catalyses the reaction tRNA(Tyr) + L-tyrosine + ATP = L-tyrosyl-tRNA(Tyr) + AMP + diphosphate + H(+). In terms of biological role, catalyzes the attachment of tyrosine to tRNA(Tyr) in a two-step reaction: tyrosine is first activated by ATP to form Tyr-AMP and then transferred to the acceptor end of tRNA(Tyr). This chain is Tyrosine--tRNA ligase, found in Nitrosomonas europaea (strain ATCC 19718 / CIP 103999 / KCTC 2705 / NBRC 14298).